The chain runs to 583 residues: Proline--tRNA ligase (583 aa).

The protein belongs to the class-II aminoacyl-tRNA synthetase family. ProS type 1 subfamily. Homodimer.

It is found in the cytoplasm. It catalyses the reaction tRNA(Pro) + L-proline + ATP = L-prolyl-tRNA(Pro) + AMP + diphosphate. In terms of biological role, catalyzes the attachment of proline to tRNA(Pro) in a two-step reaction: proline is first activated by ATP to form Pro-AMP and then transferred to the acceptor end of tRNA(Pro). As ProRS can inadvertently accommodate and process non-cognate amino acids such as alanine and cysteine, to avoid such errors it has two additional distinct editing activities against alanine. One activity is designated as 'pretransfer' editing and involves the tRNA(Pro)-independent hydrolysis of activated Ala-AMP. The other activity is designated 'posttransfer' editing and involves deacylation of mischarged Ala-tRNA(Pro). The misacylated Cys-tRNA(Pro) is not edited by ProRS. The protein is Proline--tRNA ligase of Acidothermus cellulolyticus (strain ATCC 43068 / DSM 8971 / 11B).